A 389-amino-acid chain; its full sequence is MVSVSEIRTAQRAEGPATILAIGTANPANCVEQSTYPDFYFKITNSEHKTELKEKFQRMCDKSMIKRRYMYLTEEILKENPSVCEYMAPSLDARQDMVVVEVPRLGKEAAVKAIKEWGQPKSKITHLIVCTTSGVDMPGADYQLTKLLGLRPYVKRYMMYQQGCFAGGTVLRLAKDLAENNKGARVLVVCSEVTAVTFRGPSDTHLDSLVGQALFGDGAAALIVGSDPVPEIEKPIFEMVWTAQTIAPDSEGGIDGHLREAGLTFHLLKDVPGIVSKNINKALVEAFEPLGISDYNSIFWIAHPGGPAILDQVEQKLALKPEKMKATREVLSEYGNMSSACVLVILDEMRKKSAQDGLKTTGEGLEFGVLFGFGPGLTIETVVLRSVAI.

The active site involves cysteine 164.

The protein belongs to the thiolase-like superfamily. Chalcone/stilbene synthases family.

It catalyses the reaction (E)-4-coumaroyl-CoA + 3 malonyl-CoA + 3 H(+) = 2',4,4',6'-tetrahydroxychalcone + 3 CO2 + 4 CoA. It functions in the pathway secondary metabolite biosynthesis; flavonoid biosynthesis. In terms of biological role, the primary product of this enzyme is 4,2',4',6'-tetrahydroxychalcone (also termed naringenin-chalcone or chalcone) which can under specific conditions spontaneously isomerize into naringenin. The sequence is that of Chalcone synthase 8 (CHS8) from Medicago sativa (Alfalfa).